A 248-amino-acid polypeptide reads, in one-letter code: Tyrosine recombinase XerD-like (248 aa).

One can recognise a Core-binding (CB) domain in the interval 1 to 72 (MKSYIEPFIA…TANQFLYYLY (72 aa)). Positions 85–248 (DTMKVMRTEK…PVTLEKYYKS (164 aa)) constitute a Tyr recombinase domain. Catalysis depends on residues Lys-149 and Arg-213. Tyr-245 functions as the O-(3'-phospho-DNA)-tyrosine intermediate in the catalytic mechanism.

This sequence belongs to the 'phage' integrase family. XerD-like subfamily.

The protein resides in the cytoplasm. Its function is as follows. Putative tyrosine recombinase. Not involved in the cutting and rejoining of the recombining DNA molecules on dif(SL) site. The chain is Tyrosine recombinase XerD-like from Streptococcus pyogenes serotype M3 (strain ATCC BAA-595 / MGAS315).